A 725-amino-acid polypeptide reads, in one-letter code: Sodium/hydrogen exchanger 7 (725 aa).

A disordered region spans residues 1–20 (MEPGDAARPGSGRATGAPPP). The Cytoplasmic portion of the chain corresponds to 1 to 21 (MEPGDAARPGSGRATGAPPPR). A helical membrane pass occupies residues 22-42 (LLLLPLLLGWGLRVAAAASAS). At 43-70 (SSGAAAEDSSAMEELATEKEAEESHRQD) the chain is on the lumenal side. Residues 71–91 (SVSLLTFILLLTLTILTIWLF) traverse the membrane as a helical segment. Topologically, residues 92-95 (KHRR) are cytoplasmic. Residues 96–116 (VRFLHETGLAMIYGLIVGVIL) traverse the membrane as a helical segment. Over 117–175 (RYGTPATSGRDKSLSCTQEDRAFSTLLVNVSGKFFEYTLKGEISPGKINSVEQNDMLRK) the chain is Lumenal. An N-linked (GlcNAc...) asparagine glycan is attached at Asn145. Residues 176 to 196 (VTFDPEVFFNILLPPIIFHAG) form a helical membrane-spanning segment. The Cytoplasmic segment spans residues 197–210 (YSLKKRHFFRNLGS). A helical transmembrane segment spans residues 211 to 231 (ILAYAFLGTAVSCFIIGNLMY). Over 232–251 (GVVKLMKIMGQLSDKFYYTD) the chain is Lumenal. Residues 252-272 (CLFFGAIISATDPVTVLAIFN) traverse the membrane as a helical segment. Topologically, residues 273 to 277 (ELHAD) are cytoplasmic. A helical membrane pass occupies residues 278–298 (VDLYALLFGESVLNDAVAIVL). The Lumenal portion of the chain corresponds to 299 to 322 (SSSIVAYQPAGLNTHAFDAAAFFK). A helical membrane pass occupies residues 323–343 (SVGIFLGIFSGSFTMGAVTGV). Over 344 to 349 (NANVTK) the chain is Cytoplasmic. 2 helical membrane passes run 350–370 (FTKL…MSWS) and 371–391 (TFLL…FCGI). At 392-414 (TQAHYTYNNLSVESRSRTKQLFE) the chain is on the cytoplasmic side. The helical transmembrane segment at 415–435 (VLHFLAENFIFSYMGLALFTF) threads the bilayer. Residues 436–442 (QKHVFSP) lie on the Lumenal side of the membrane. Residues 443–463 (IFIIGAFVAIFLGRAAHIYPL) form a helical membrane-spanning segment. The Cytoplasmic segment spans residues 464-474 (SFFLNLGRRHK). Residues 475–497 (IGWNFQHMMMFSGLRGAMAFALA) traverse the membrane as a helical segment. At 498-513 (IRDTASYARQMMFTTT) the chain is on the lumenal side. Residues 514–534 (LLIVFFTVWIIGGGTTPMLSW) traverse the membrane as a helical segment. 2 required for trans-Golgi network localization regions span residues 533–559 (SWLN…YFRV) and 563–568 (PDQDPP). The Cytoplasmic segment spans residues 535-725 (LNIRVGVEEP…RLVFPLEDNA (191 aa)). A Phosphoserine modification is found at Ser545. Disordered stretches follow at residues 567–590 (PPPN…GNRT) and 669–714 (TVTA…SSRG). A compositionally biased stretch (low complexity) spans 675 to 684 (SSSSHTASTS). The segment covering 687 to 704 (GSRRTKSSSEEVLERDLG) has biased composition (basic and acidic residues).

It belongs to the monovalent cation:proton antiporter 1 (CPA1) transporter (TC 2.A.36) family. In terms of assembly, interacts with SCAMP1, SCAMP2 and SCAMP5; may participate in its shuttling from trans-Golgi network to recycling endosomes. Post-translationally, N-glycosylated. Ubiquitously expressed.

It is found in the golgi apparatus. Its subcellular location is the trans-Golgi network membrane. The protein resides in the recycling endosome membrane. It localises to the cell membrane. The enzyme catalyses Na(+)(in) + H(+)(out) = Na(+)(out) + H(+)(in). It catalyses the reaction K(+)(in) + H(+)(out) = K(+)(out) + H(+)(in). Its activity is regulated as follows. Inhibited by benzamil and quinine but not by amiloride. Functionally, golgi Na(+), K(+)/(H+) antiporter. Mediates the electoneutral influx of Na(+) or K(+) in exchange for H(+). May contribute to the regulation of Golgi apparatus volume and pH. The sequence is that of Sodium/hydrogen exchanger 7 (SLC9A7) from Homo sapiens (Human).